A 363-amino-acid chain; its full sequence is MKLHEENNKALFEAMRNRENPTKWESYKQVITAVSAYWVFSIGLVFLNKYLLSSVQLDAPLFITWYQCLVTVFLCLFLSKTSKAYGLFKFPSMPIDAKISREVLPLSVVFVAMISFNNLCLKYVGVSFYYVGRSLTTVFNVVCTYLILGQKTSGQAIGCCALIIFGFLLGVDQEGVTGTLSYTGVIFGVLASLSVALNAIYTRKVLSSVGDCLWRLTMYNNLNALVLFLPLMLFNGEFGAVFYFDKLFDTTFWILMTLGGVFGFMMGYVTGWQIQATSPLTHNISGTAKAAAQTVMAVVWYSELKTLLWWTSNFVVLFGSGMYTYVQKRVMDKKNSGASPASEAKSDKVKLLGRDGNAAEESV.

Helical transmembrane passes span 30-47 (VITA…LVFL), 62-79 (FITW…LFLS), 126-148 (VSFY…YLIL), 152-171 (TSGQ…LLGV), 180-202 (LSYT…AIYT), 222-244 (LNAL…VFYF), 251-273 (TFWI…TGWQ), and 307-326 (LLWW…YTYV). Residues 334-363 (KNSGASPASEAKSDKVKLLGRDGNAAEESV) form a disordered region. Residues 344 to 353 (AKSDKVKLLG) are compositionally biased toward basic and acidic residues.

The protein belongs to the TPT transporter family. SLC35C subfamily.

It is found in the golgi apparatus membrane. Functionally, involved in GDP-fucose import from the cytoplasm into the Golgi lumen. The chain is GDP-fucose transporter from Caenorhabditis elegans.